The sequence spans 559 residues: Hepatocyte nuclear factor 1-beta-A (559 aa).

The segment at 1–35 is dimerization; that stretch reads MFANMVSKLTSLQQELLSALLDSGVTKDVLLQALE. Residues 5–36 form the HNF-p1 domain; that stretch reads MVSKLTSLQQELLSALLDSGVTKDVLLQALED. Residues 53-98 form a disordered region; sequence MSPSGSKLSDTDSKPVFHTLTNGHSKGKLSGDEGSEDGDDYDTPPI. The segment covering 85–94 has biased composition (acidic residues); the sequence is EGSEDGDDYD. The POU-specific atypical domain maps to 100–195; sequence KELQSQNTEE…ILRQFNQATQ (96 aa). The homeobox; HNF1-type DNA-binding region spans 240 to 320; the sequence is LRRNRFKWGP…NRRKEEAFRQ (81 aa). Low complexity-rich tracts occupy residues 334–354 and 370–381; these read LNSL…SPPS and TSSTTINHHSSN. The disordered stretch occupies residues 334-384; sequence LNSLLSHSSPHHPQTSSSPPSKMQGVRYSQQGPGEVTSSTTINHHSSNAMS.

The protein belongs to the HNF1 homeobox family. Binds DNA as a dimer. Can form homodimer or heterodimer with HNF1-alpha. During embryonic development, expressed dynamically in the developing hindbrain, kidney (pronephros), gut, liver and pancreas; expressed in both intermediate mesoderm (precursor to the kidney) and the caudal hindbrain (including rhombomeres r5 and r6) at 10 hpf with expression diminishing caudally by 14 hpf. Strongly expressed in adult kidney, gut, liver and swim bladder; weakly expressed in brain, eye, testis, ovary and heart.

The protein localises to the nucleus. Transcription factor that binds to the inverted palindrome 5'-GTTAATNATTAAC-3'. Required for induction of rhombomere r5/r6 gene expression in the hindbrain. The protein is Hepatocyte nuclear factor 1-beta-A (hnf1ba) of Danio rerio (Zebrafish).